An 86-amino-acid chain; its full sequence is Small ribosomal subunit protein uS17 (86 aa).

The protein belongs to the universal ribosomal protein uS17 family. Part of the 30S ribosomal subunit.

Its function is as follows. One of the primary rRNA binding proteins, it binds specifically to the 5'-end of 16S ribosomal RNA. The sequence is that of Small ribosomal subunit protein uS17 from Roseiflexus sp. (strain RS-1).